The following is a 184-amino-acid chain: HVA22-like protein c (184 aa).

Transmembrane regions (helical) follow at residues 13 to 33 (VLIKNFDVLALPLVTLVYPLY), 51 to 71 (LTYWVLYALISLFELTFSKPL), and 73 to 93 (WFPIWPYMKLFGICWLVLPQF).

Belongs to the DP1 family. In terms of tissue distribution, predominantly expressed in flower buds and stem.

It localises to the membrane. The protein is HVA22-like protein c (HVA22C) of Arabidopsis thaliana (Mouse-ear cress).